A 167-amino-acid polypeptide reads, in one-letter code: Putative 4-hydroxy-4-methyl-2-oxoglutarate aldolase (167 aa).

Substrate is bound by residues 81–84 (GDII) and arginine 103. Aspartate 104 is a binding site for a divalent metal cation.

The protein belongs to the class II aldolase/RraA-like family. Homotrimer. A divalent metal cation is required as a cofactor.

It catalyses the reaction 4-hydroxy-4-methyl-2-oxoglutarate = 2 pyruvate. It carries out the reaction oxaloacetate + H(+) = pyruvate + CO2. Its function is as follows. Catalyzes the aldol cleavage of 4-hydroxy-4-methyl-2-oxoglutarate (HMG) into 2 molecules of pyruvate. Also contains a secondary oxaloacetate (OAA) decarboxylase activity due to the common pyruvate enolate transition state formed following C-C bond cleavage in the retro-aldol and decarboxylation reactions. The chain is Putative 4-hydroxy-4-methyl-2-oxoglutarate aldolase from Corynebacterium jeikeium (strain K411).